Reading from the N-terminus, the 108-residue chain is Class I hydrophobin 3 (108 aa).

Residues Met1–Ala17 form the signal peptide. Intrachain disulfides connect Cys28-Cys87, Cys35-Cys81, Cys36-Cys69, and Cys88-Cys101. Asn37 carries an N-linked (GlcNAc...) asparagine glycan.

This sequence belongs to the fungal hydrophobin family. In terms of assembly, self-assembles to form functional amyloid fibrils called rodlets. Self-assembly into fibrillar rodlets occurs spontaneously at hydrophobic:hydrophilic interfaces and the rodlets further associate laterally to form amphipathic monolayers.

Its subcellular location is the secreted. It is found in the cell wall. In terms of biological role, aerial growth, conidiation, and dispersal of filamentous fungi in the environment rely upon a capability of their secreting small amphipathic proteins called hydrophobins (HPBs) with low sequence identity. Class I can self-assemble into an outermost layer of rodlet bundles on aerial cell surfaces, conferring cellular hydrophobicity that supports fungal growth, development and dispersal; whereas Class II form highly ordered films at water-air interfaces through intermolecular interactions but contribute nothing to the rodlet structure. Vmh3 is a class I hydrophobin that is essential for the maintenance of the surface hydrophobicity of the mycelium and might be involved in the development of fruiting bodies. Plays an important role in hyphal resistance against environmental stress. Necessary for the efficient biodegradation of lignin. In Pleurotus ostreatus (strain PC15) (Oyster mushroom), this protein is Class I hydrophobin 3.